The following is a 141-amino-acid chain: Large ribosomal subunit protein uL11 (141 aa).

The protein belongs to the universal ribosomal protein uL11 family. Part of the ribosomal stalk of the 50S ribosomal subunit. Interacts with L10 and the large rRNA to form the base of the stalk. L10 forms an elongated spine to which L12 dimers bind in a sequential fashion forming a multimeric L10(L12)X complex. In terms of processing, one or more lysine residues are methylated.

Its function is as follows. Forms part of the ribosomal stalk which helps the ribosome interact with GTP-bound translation factors. This Ligilactobacillus salivarius (strain UCC118) (Lactobacillus salivarius) protein is Large ribosomal subunit protein uL11.